Here is a 205-residue protein sequence, read N- to C-terminus: Imidazole glycerol phosphate synthase subunit HisH (205 aa).

In terms of domain architecture, Glutamine amidotransferase type-1 spans 3-205 (RIALLDYGMG…LLKNFVEWNI (203 aa)). Cys-80 acts as the Nucleophile in catalysis. Residues His-185 and Glu-187 contribute to the active site.

As to quaternary structure, heterodimer of HisH and HisF.

Its subcellular location is the cytoplasm. It carries out the reaction 5-[(5-phospho-1-deoxy-D-ribulos-1-ylimino)methylamino]-1-(5-phospho-beta-D-ribosyl)imidazole-4-carboxamide + L-glutamine = D-erythro-1-(imidazol-4-yl)glycerol 3-phosphate + 5-amino-1-(5-phospho-beta-D-ribosyl)imidazole-4-carboxamide + L-glutamate + H(+). The enzyme catalyses L-glutamine + H2O = L-glutamate + NH4(+). It functions in the pathway amino-acid biosynthesis; L-histidine biosynthesis; L-histidine from 5-phospho-alpha-D-ribose 1-diphosphate: step 5/9. IGPS catalyzes the conversion of PRFAR and glutamine to IGP, AICAR and glutamate. The HisH subunit catalyzes the hydrolysis of glutamine to glutamate and ammonia as part of the synthesis of IGP and AICAR. The resulting ammonia molecule is channeled to the active site of HisF. The polypeptide is Imidazole glycerol phosphate synthase subunit HisH (Acinetobacter baylyi (strain ATCC 33305 / BD413 / ADP1)).